The chain runs to 366 residues: 5-formaminoimidazole-4-carboxamide-1-(beta)-D-ribofuranosyl 5'-monophosphate synthetase (366 aa).

H27 and S96 together coordinate 5-amino-1-(5-phospho-beta-D-ribosyl)imidazole-4-carboxamide. In terms of domain architecture, ATP-grasp spans 131–357; it reads RKWLEDAGVP…IAREIKEAVK (227 aa). Residues 154–208 and E239 contribute to the ATP site; that span reads PVIV…VRFY. Residue N263 coordinates 5-amino-1-(5-phospho-beta-D-ribosyl)imidazole-4-carboxamide. Mg(2+)-binding residues include E302 and E315.

It belongs to the phosphohexose mutase family. Mg(2+) is required as a cofactor. Mn(2+) serves as cofactor.

It carries out the reaction 5-amino-1-(5-phospho-beta-D-ribosyl)imidazole-4-carboxamide + formate + ATP = 5-formamido-1-(5-phospho-D-ribosyl)imidazole-4-carboxamide + ADP + phosphate. It participates in purine metabolism; IMP biosynthesis via de novo pathway; 5-formamido-1-(5-phospho-D-ribosyl)imidazole-4-carboxamide from 5-amino-1-(5-phospho-D-ribosyl)imidazole-4-carboxamide (formate route): step 1/1. In terms of biological role, catalyzes the ATP- and formate-dependent formylation of 5-aminoimidazole-4-carboxamide-1-beta-d-ribofuranosyl 5'-monophosphate (AICAR) to 5-formaminoimidazole-4-carboxamide-1-beta-d-ribofuranosyl 5'-monophosphate (FAICAR) in the absence of folates. In Korarchaeum cryptofilum (strain OPF8), this protein is 5-formaminoimidazole-4-carboxamide-1-(beta)-D-ribofuranosyl 5'-monophosphate synthetase.